Consider the following 463-residue polypeptide: Quinolone resistance protein NorB (463 aa).

The next 14 helical transmembrane spans lie at 17 to 37 (IGIV…VNVV), 53 to 73 (IAVS…GGLA), 86 to 106 (IILN…LLLI), 107 to 127 (IGRL…LSII), 142 to 162 (YWSI…GAVA), 165 to 185 (LGWR…LFLI), 201 to 221 (FDIK…ILIT), 230 to 250 (SLLF…FIVL), 273 to 293 (TASN…NTFV), 299 to 319 (YSSL…LIMI), 334 to 354 (PMLI…LTFL), 357 to 377 (ILYV…LGIY), 403 to 423 (MASA…YAIV), and 435 to 455 (IALW…LLLV).

This sequence belongs to the major facilitator superfamily. TCR/Tet family.

The protein resides in the cell membrane. Multidrug efflux pump that acts independently of NorA and is one of the factors that confers resistance against diverse quinolones and chemical compounds. The protein is Quinolone resistance protein NorB (norB) of Staphylococcus aureus (strain Mu3 / ATCC 700698).